A 104-amino-acid chain; its full sequence is Large ribosomal subunit protein uL23 (104 aa).

Belongs to the universal ribosomal protein uL23 family. Part of the 50S ribosomal subunit. Contacts protein L29, and trigger factor when it is bound to the ribosome.

In terms of biological role, one of the early assembly proteins it binds 23S rRNA. One of the proteins that surrounds the polypeptide exit tunnel on the outside of the ribosome. Forms the main docking site for trigger factor binding to the ribosome. This is Large ribosomal subunit protein uL23 from Rhodospirillum rubrum (strain ATCC 11170 / ATH 1.1.1 / DSM 467 / LMG 4362 / NCIMB 8255 / S1).